Consider the following 157-residue polypeptide: Immediate-early protein ICP-18 (157 aa).

This Frog virus 3 (isolate Goorha) (FV-3) protein is Immediate-early protein ICP-18.